The chain runs to 172 residues: Phosphopantetheine adenylyltransferase (172 aa).

Serine 9 provides a ligand contact to substrate. ATP is bound by residues 9–10 (SF) and histidine 17. Residues lysine 41, leucine 78, and arginine 92 each contribute to the substrate site. Residues 93 to 95 (GLR), glutamate 103, and 128 to 134 (GRAITST) each bind ATP.

It belongs to the bacterial CoaD family. As to quaternary structure, homohexamer. The cofactor is Mg(2+).

Its subcellular location is the cytoplasm. The enzyme catalyses (R)-4'-phosphopantetheine + ATP + H(+) = 3'-dephospho-CoA + diphosphate. It participates in cofactor biosynthesis; coenzyme A biosynthesis; CoA from (R)-pantothenate: step 4/5. Functionally, reversibly transfers an adenylyl group from ATP to 4'-phosphopantetheine, yielding dephospho-CoA (dPCoA) and pyrophosphate. The polypeptide is Phosphopantetheine adenylyltransferase (Bartonella quintana (strain Toulouse) (Rochalimaea quintana)).